Reading from the N-terminus, the 104-residue chain is Phosphoribosyl-ATP pyrophosphatase (104 aa).

The protein belongs to the PRA-PH family.

It is found in the cytoplasm. It catalyses the reaction 1-(5-phospho-beta-D-ribosyl)-ATP + H2O = 1-(5-phospho-beta-D-ribosyl)-5'-AMP + diphosphate + H(+). It participates in amino-acid biosynthesis; L-histidine biosynthesis; L-histidine from 5-phospho-alpha-D-ribose 1-diphosphate: step 2/9. The chain is Phosphoribosyl-ATP pyrophosphatase from Methanosarcina barkeri (strain Fusaro / DSM 804).